The sequence spans 1157 residues: Pesticidal crystal protein Cry9Ca (1157 aa).

This sequence belongs to the delta endotoxin family.

Promotes colloidosmotic lysis by binding to the midgut epithelial cells of Lepidoptera larvae. Has a fairly broad spectrum of activity against members of the Pyralidae, Plutellidae, Sphingidae and Noctuidae families. It was the first insecticidal crystal protein characterized with activity against cutworms. No activity is observed against some beetles, such as the Colorado potato beetle. The protein is Pesticidal crystal protein Cry9Ca (cry9Ca) of Bacillus thuringiensis subsp. tolworthi.